We begin with the raw amino-acid sequence, 730 residues long: Guanyl-specific ribonuclease pgl-1 (730 aa).

Positions 205–447 (KQLMLDGPKS…VTRIVESLEK (243 aa)) are involved in dimerization. His437 serves as the catalytic Proton acceptor. Composition is skewed to polar residues over residues 452–472 (DTPS…QDSA) and 568–595 (DANQ…SPTK). Disordered regions lie at residues 452-475 (DTPS…AYTK), 567-639 (SDAN…TPMP), and 686-730 (GGRG…RGGF). Residues 674–730 (GGGRGGYGGGDRGGRGGYGGDRGGRGGYGGGDRGGRGGYGGDRGRGGYGGRGGRGGF) are RNA-binding RGG-box.

In terms of assembly, homodimer. Interacts with pgl-2 and pgl-3; this association is not required for P-granule localization of either pgl-2 or pgl-3. Interacts with ife-1. Interacts with prmt-1; the interaction is direct. Interacts with nmad-1. Interacts with P granule components meg-1, meg-3 and meg-4. Does not require metal ions for catalytic activity. is required as a cofactor. In terms of processing, methylated at arginine residues in the RNA-binding RGG-box by prmt-1. Methylation promotes P-granule degradation by autophagy. Expressed in the germline. Expressed in most somatic cells.

Its subcellular location is the cytoplasmic granule. The enzyme catalyses [RNA] containing guanosine + H2O = an [RNA fragment]-3'-guanosine-3'-phosphate + a 5'-hydroxy-ribonucleotide-3'-[RNA fragment].. Not inhibited by RNase inhibitor RNasin. Functionally, guanyl-specific endoribonuclease which cleaves the phosphodiester bond in single-stranded RNA between the 3'-guanylic residue and the 5'-OH residue of adjacent nucleotide, resulting in the formation of a corresponding 2',3'-cyclic phosphate intermediate. Together with the P-granule component pgl-3, is involved in the formation of P-granules. Together with pgl-3, probably recruits other granule components such as pos-1, mex-3 and glh-1 to P-granules. In addition, may act redundantly with pgl-3 to protect germ cells from excessive germline apoptosis during normal oogenesis and development of the two gonadal arms. This may in part be through regulating the localization of sir-2.1 which is involved in germ cell apoptosis. May protect somatic cells from excessive apoptosis during normal development. Essential role in male and female postembryonic germline development; maternally provided protein maintains a population of proliferating germ cells and zygotic expression is required for correct oogenesis. This Caenorhabditis elegans protein is Guanyl-specific ribonuclease pgl-1.